Consider the following 424-residue polypeptide: Isoflavipucine cluster transcription factor ATEG_00326 (424 aa).

Positions 10-38 (CDRCHGQKLRCIHSGGGPCVRCAKAKATC) form a DNA-binding region, zn(2)-C6 fungal-type. Positions 265–286 (ARMQTPEGTPERTSESSPSGPP) are disordered.

It is found in the nucleus. Its function is as follows. Transcription factor that regulates the expression of the gene cluster that mediates the biosynthesis of isoflavipucine. This chain is Isoflavipucine cluster transcription factor ATEG_00326, found in Aspergillus terreus (strain NIH 2624 / FGSC A1156).